A 211-amino-acid polypeptide reads, in one-letter code: WAP four-disulfide core domain protein 1 (211 aa).

The signal sequence occupies residues 1–23 (MGNCGRKVLRALSFLLLLGSSSA). Residues 50–99 (RQPHADRCPPPPRTLPPGACQATRCQADSECPRHRRCCYNGCAYACLEAV) form the WAP domain. 4 disulfide bridges follow: C57–C87, C69–C91, C74–C86, and C80–C95. Residues 182-198 (VLRQRLHKEYPEGDSKN) are compositionally biased toward basic and acidic residues. A disordered region spans residues 182–211 (VLRQRLHKEYPEGDSKNVAEPGKGQQRHFP).

It localises to the secreted. Its function is as follows. Has growth inhibitory activity. The polypeptide is WAP four-disulfide core domain protein 1 (Wfdc1) (Mus musculus (Mouse)).